A 479-amino-acid polypeptide reads, in one-letter code: UDP-glycosyltransferase 84A3 (479 aa).

H19 serves as the catalytic Proton acceptor. An anthocyanidin is bound at residue H19. The UDP-alpha-D-glucose site is built by Q346, H361, W364, N365, S366, and E369. G384 provides a ligand contact to an anthocyanidin. UDP-alpha-D-glucose is bound by residues D385 and Q386.

It belongs to the UDP-glycosyltransferase family.

It catalyses the reaction (E)-4-coumarate + UDP-alpha-D-glucose = 4-O-(beta-D-glucosyl)-trans-4-coumarate + UDP + H(+). The enzyme catalyses (E)-ferulate + UDP-alpha-D-glucose = 1-O-[(E)-feruloyl]-beta-D-glucose + UDP. The catalysed reaction is (E)-caffeate + UDP-alpha-D-glucose = 1-O-[(E)-caffeoyl]-beta-D-glucose + UDP. It carries out the reaction (E)-sinapate + UDP-alpha-D-glucose = 1-O-(trans-sinapoyl)-beta-D-glucose + UDP. It catalyses the reaction (E)-cinnamate + UDP-alpha-D-glucose = 1-O-(trans-cinnamoyl)-beta-D-glucose + UDP. In terms of biological role, UDP-glucosyltransferase that forms glucose esters with phenylpropanoids. Glucosylates 4-coumarate, ferulate, caffeate, sinapate and cinnamate. The protein is UDP-glycosyltransferase 84A3 of Arabidopsis thaliana (Mouse-ear cress).